The following is a 72-amino-acid chain: Small ribosomal subunit protein bS20 (72 aa).

It belongs to the bacterial ribosomal protein bS20 family.

Binds directly to 16S ribosomal RNA. This is Small ribosomal subunit protein bS20 (rpsT) from Proteus mirabilis.